Consider the following 150-residue polypeptide: 3-dehydroquinate dehydratase (150 aa).

The Proton acceptor role is filled by tyrosine 26. Residues asparagine 77, histidine 83, and aspartate 90 each coordinate substrate. The active-site Proton donor is the histidine 103. Substrate is bound by residues 104–105 and arginine 114; that span reads LS.

Belongs to the type-II 3-dehydroquinase family. As to quaternary structure, homododecamer.

It carries out the reaction 3-dehydroquinate = 3-dehydroshikimate + H2O. Its pathway is metabolic intermediate biosynthesis; chorismate biosynthesis; chorismate from D-erythrose 4-phosphate and phosphoenolpyruvate: step 3/7. Catalyzes a trans-dehydration via an enolate intermediate. This Sodalis glossinidius (strain morsitans) protein is 3-dehydroquinate dehydratase.